A 274-amino-acid polypeptide reads, in one-letter code: Large ribosomal subunit protein uL2 (274 aa).

The tract at residues 224–259 (AMNPVDHPHGGGEGRTSGGRHPVTPWGIPTKGYKTR) is disordered.

The protein belongs to the universal ribosomal protein uL2 family. As to quaternary structure, part of the 50S ribosomal subunit. Forms a bridge to the 30S subunit in the 70S ribosome.

Functionally, one of the primary rRNA binding proteins. Required for association of the 30S and 50S subunits to form the 70S ribosome, for tRNA binding and peptide bond formation. It has been suggested to have peptidyltransferase activity; this is somewhat controversial. Makes several contacts with the 16S rRNA in the 70S ribosome. This chain is Large ribosomal subunit protein uL2, found in Geobacter sp. (strain M21).